A 3623-amino-acid chain; its full sequence is Cubilin (3623 aa).

The first 23 residues, 1–23, serve as a signal peptide directing secretion; it reads MMNMSLPFLWSLLTLLIFAEVNG. Residues 24–35 constitute a propeptide, removed in mature form; that stretch reads EAGELELQRQKR. Positions 42-49 are interaction with AMN; the sequence is PRMATERG. Asn105 is a glycosylation site (N-linked (GlcNAc...) asparagine). One can recognise an EGF-like 1 domain in the interval 132 to 168; it reads DKKVCSSNPCQNGGTCLNLHDSFFCICPPQWKGPLCS. Intrachain disulfides connect Cys136–Cys147, Cys141–Cys156, Cys158–Cys167, Cys174–Cys190, Cys184–Cys199, Cys201–Cys210, Cys267–Cys280, Cys274–Cys289, and Cys292–Cys303. An EGF-like 2; calcium-binding domain is found at 170–211; it reads DVNECEIYSGTPLSCQNGGTCVNTMGSYSCHCPPETYGPQCA. One can recognise an EGF-like 3; calcium-binding domain in the interval 263–304; that stretch reads DRDECSFQPGPCSTLVQCFNTQGSFYCGACPTGWQGNGYICE. The 44-residue stretch at 305 to 348 folds into the EGF-like 4; calcium-binding domain; the sequence is DINECEINNGGCSVAPPVECVNTPGSSHCQACPPGYQGDGRVCT. EGF-like domains lie at 349-385 and 395-430; these read LTDI…YTGN and LSNI…VNCT. Intrachain disulfides connect Cys353/Cys366, Cys360/Cys376, Cys399/Cys409, Cys404/Cys418, Cys420/Cys429, Cys436/Cys447, Cys441/Cys456, Cys458/Cys467, Cys474/Cys500, Cys527/Cys549, Cys590/Cys616, Cys643/Cys665, and Cys708/Cys734. N-linked (GlcNAc...) asparagine glycosylation occurs at Asn428. The region spanning 432–468 is the EGF-like 7; calcium-binding domain; that stretch reads NINECLSNPCLNGGTCVDGVDSFSCECTRLWTGALCQ. CUB domains are found at residues 474 to 586, 590 to 702, 708 to 816, 816 to 928, 932 to 1042, 1048 to 1161, 1165 to 1277, 1278 to 1389, 1391 to 1506, 1510 to 1619, 1620 to 1734, 1738 to 1850, 1852 to 1963, 1978 to 2091, 2092 to 2213, 2217 to 2334, 2336 to 2448, 2452 to 2565, 2570 to 2687, 2689 to 2801, 2805 to 2919, 2920 to 3035, 3037 to 3150, 3157 to 3274, 3278 to 3393, 3395 to 3507, and 3511 to 3623; these read CGES…WETQ, CGGI…YLTS, CGGN…YQVA, ACGD…FSAE, CGEI…YEAI, CLQD…WDGS, CGGN…YRQT, CENV…WFVY, CGGE…WQAV, CGGI…FRQA, CGGH…VTAS, CGGT…FMKI, GNDN…WFAV, CGGF…FHKS, CGGY…YEAK, CGGN…YSIA, CGGR…FESS, CGGD…YTSS, CGGS…YSFT, CGGI…WNTQ, CGGI…FVSR, CGSN…YRII, CGGV…FRQT, CGGY…YTIM, CGGT…YQIA, CNRD…WTSS, and CGGT…TWDS. Asn482 carries N-linked (GlcNAc...) asparagine glycosylation. N-linked (GlcNAc...) asparagine glycosylation is found at Asn711, Asn749, Asn781, and Asn857. Cystine bridges form between Cys869-Cys891 and Cys932-Cys958. Asn957 carries an N-linked (GlcNAc...) asparagine glycan. A Ca(2+)-binding site is contributed by Glu980. An N-linked (GlcNAc...) asparagine glycan is attached at Asn984. An intrachain disulfide couples Cys985 to Cys1005. Ca(2+) contacts are provided by Asp988, Asp1027, Asp1029, and Leu1030. A disulfide bond links Cys1048 and Cys1074. Asn1092 carries an N-linked (GlcNAc...) asparagine glycan. Ca(2+) is bound by residues Glu1096, Asp1105, Asp1146, Ile1148, and Asp1149. The cysteines at positions 1165 and 1191 are disulfide-linked. N-linked (GlcNAc...) asparagine glycosylation is present at Asn1168. Glu1213 contributes to the Ca(2+) binding site. Residue Asn1217 is glycosylated (N-linked (GlcNAc...) asparagine). An intrachain disulfide couples Cys1218 to Cys1240. Positions 1221, 1262, 1264, and 1265 each coordinate Ca(2+). Cys1278 and Cys1306 are oxidised to a cystine. 3 N-linked (GlcNAc...) asparagine glycosylation sites follow: Asn1285, Asn1307, and Asn1319. Glu1328 is a binding site for Ca(2+). Asn1332 carries N-linked (GlcNAc...) asparagine glycosylation. Cys1333 and Cys1351 are joined by a disulfide. Residues Asp1336, Asp1373, and Val1375 each contribute to the Ca(2+) site. Intrachain disulfides connect Cys1391–Cys1417 and Cys1444–Cys1466. N-linked (GlcNAc...) asparagine glycosylation is present at Asn1500. A disulfide bridge links Cys1510 with Cys1536. Asn1551 carries an N-linked (GlcNAc...) asparagine glycan. 5 cysteine pairs are disulfide-bonded: Cys1563-Cys1581, Cys1620-Cys1647, Cys1675-Cys1697, Cys1738-Cys1764, and Cys1791-Cys1812. Asn1646 is a glycosylation site (N-linked (GlcNAc...) asparagine). 3 N-linked (GlcNAc...) asparagine glycosylation sites follow: Asn1802, Asn1819, and Asn1885. Intrachain disulfides connect Cys1905/Cys1927, Cys1978/Cys2006, and Cys2032/Cys2054. 2 N-linked (GlcNAc...) asparagine glycosylation sites follow: Asn2085 and Asn2117. Intrachain disulfides connect Cys2092/Cys2118 and Cys2217/Cys2247. A glycan (N-linked (GlcNAc...) asparagine) is linked at Asn2274. 2 disulfide bridges follow: Cys2275–Cys2297 and Cys2336–Cys2363. N-linked (GlcNAc...) asparagine glycosylation is found at Asn2386 and Asn2400. 3 disulfide bridges follow: Cys2390–Cys2411, Cys2452–Cys2478, and Cys2505–Cys2527. Residues Asn2531, Asn2581, Asn2592, and Asn2610 are each glycosylated (N-linked (GlcNAc...) asparagine). Cys2570 and Cys2599 are oxidised to a cystine. 7 disulfides stabilise this stretch: Cys2628–Cys2649, Cys2689–Cys2715, Cys2742–Cys2764, Cys2805–Cys2831, Cys2860–Cys2883, Cys2920–Cys2946, and Cys2977–Cys2999. N-linked (GlcNAc...) asparagine glycosylation occurs at Asn2813. Asn2923 and Asn2945 each carry an N-linked (GlcNAc...) asparagine glycan. Thr3008 is subject to Phosphothreonine. 2 cysteine pairs are disulfide-bonded: Cys3037–Cys3064 and Cys3091–Cys3113. N-linked (GlcNAc...) asparagine glycosylation is found at Asn3042, Asn3103, Asn3125, and Asn3165. Intrachain disulfides connect Cys3157–Cys3185 and Cys3215–Cys3237. Residues Asn3268, Asn3283, Asn3290, and Asn3295 are each glycosylated (N-linked (GlcNAc...) asparagine). Disulfide bonds link Cys3278–Cys3306 and Cys3332–Cys3354. N-linked (GlcNAc...) asparagine glycosylation occurs at Asn3357. Cysteines 3395 and 3421 form a disulfide. 4 N-linked (GlcNAc...) asparagine glycosylation sites follow: Asn3430, Asn3457, Asn3533, and Asn3576. Disulfide bonds link Cys3448–Cys3470, Cys3511–Cys3537, and Cys3564–Cys3586.

Interacts with AMN. Component of the cubam complex composed of one CUBN trimer and one AMN chain. The cubam complex can dimerize. Interacts with LRP2 in a dual-receptor complex in a calcium-dependent manner. Found in a complex with PID1/PCLI1, LRP1 and CUBNI. Interacts with LRP1 and PID1/PCLI1. Post-translationally, the precursor is cleaved by a trans-Golgi proteinase furin, removing a propeptide. In terms of processing, N-glycosylated. As to expression, detected in kidney cortex (at protein level). Expressed in kidney proximal tubule cells, placenta, visceral yolk-sac cells and in absorptive intestinal cells. Expressed in the epithelium of intestine and kidney.

Its subcellular location is the apical cell membrane. The protein localises to the cell membrane. It is found in the membrane. The protein resides in the coated pit. It localises to the endosome. Its subcellular location is the lysosome membrane. Functionally, endocytic receptor which plays a role in lipoprotein, vitamin and iron metabolism by facilitating their uptake. Acts together with LRP2 to mediate endocytosis of high-density lipoproteins, GC, hemoglobin, ALB, TF and SCGB1A1. Acts together with AMN to mediate endocytosis of the CBLIF-cobalamin complex. Binds to ALB, MB, Kappa and lambda-light chains, TF, hemoglobin, GC, SCGB1A1, APOA1, high density lipoprotein, and the CBLIF-cobalamin complex. Ligand binding requires calcium. Serves as important transporter in several absorptive epithelia, including intestine, renal proximal tubules and embryonic yolk sac. May play an important role in the development of the peri-implantation embryo through internalization of APOA1 and cholesterol. Binds to LGALS3 at the maternal-fetal interface. This is Cubilin (CUBN) from Homo sapiens (Human).